The chain runs to 181 residues: ADP-ribosylation factor 1 (181 aa).

Gly2 is lipidated: N-myristoyl glycine. The tract at residues 3 to 16 (NMFANLFKGLFGKK) is important for the stable binding to the membranes. GTP-binding positions include 24–32 (GLDAAGKTT), 126–129 (NKQD), and Ala160.

This sequence belongs to the small GTPase superfamily. Arf family.

It localises to the golgi apparatus membrane. It carries out the reaction GTP + H2O = GDP + phosphate + H(+). Alternates between an inactive GDP-bound form and an active GTP-bound form. Activated by a guanine nucleotide-exchange factor (GEF) and inactivated by GTPase-activating protein (GAP). In terms of biological role, small GTPase involved in protein trafficking between different compartments. Modulates vesicle budding and uncoating within the Golgi complex. In its GTP-bound form, triggers the recruitment of coatomer proteins to the Golgi membrane. The hydrolysis of ARF1-bound GTP, which is mediated by ARFGAPs proteins, is required for dissociation of coat proteins from Golgi membranes and vesicles. The protein is ADP-ribosylation factor 1 (arf1) of Xenopus laevis (African clawed frog).